The primary structure comprises 387 residues: [LysW]-aminoadipate semialdehyde/glutamate semialdehyde transaminase (387 aa).

Residues 96 to 97 (GT) and phenylalanine 123 each bind pyridoxal 5'-phosphate. A substrate-binding site is contributed by arginine 126. Pyridoxal 5'-phosphate is bound at residue 207–210 (DEVQ). Lysine 236 is modified (N6-(pyridoxal phosphate)lysine). Serine 264 serves as a coordination point for substrate. Threonine 265 contributes to the pyridoxal 5'-phosphate binding site.

This sequence belongs to the class-III pyridoxal-phosphate-dependent aminotransferase family. LysJ subfamily. Homodimer. The cofactor is pyridoxal 5'-phosphate.

It is found in the cytoplasm. The catalysed reaction is [amino-group carrier protein]-C-terminal-gamma-(L-lysyl)-L-glutamate + 2-oxoglutarate = [amino-group carrier protein]-C-terminal-N-(1-carboxy-5-oxopentan-1-yl)-L-glutamine + L-glutamate. The enzyme catalyses [amino-group carrier protein]-C-terminal-gamma-(L-ornithyl)-L-glutamate + 2-oxoglutarate = [amino-group carrier protein]-C-terminal-gamma-(L-glutamyl-5-semialdehyde)-L-glutamate + L-glutamate. The protein operates within amino-acid biosynthesis; L-lysine biosynthesis via AAA pathway; L-lysine from L-alpha-aminoadipate (Thermus route): step 4/5. Its pathway is amino-acid biosynthesis; L-arginine biosynthesis. Its function is as follows. Involved in both the arginine and lysine biosynthetic pathways. In Sulfurisphaera tokodaii (strain DSM 16993 / JCM 10545 / NBRC 100140 / 7) (Sulfolobus tokodaii), this protein is [LysW]-aminoadipate semialdehyde/glutamate semialdehyde transaminase.